Consider the following 345-residue polypeptide: DNA-directed RNA polymerase subunit alpha (345 aa).

The interval 1–233 (MVRNWCSLIR…KQLQVFVGLH (233 aa)) is alpha N-terminal domain (alpha-NTD). Residues 256 to 345 (LNDILLRHVE…EEMGEIQEEG (90 aa)) form an alpha C-terminal domain (alpha-CTD) region.

This sequence belongs to the RNA polymerase alpha chain family. As to quaternary structure, homodimer. The RNAP catalytic core consists of 2 alpha, 1 beta, 1 beta' and 1 omega subunit. When a sigma factor is associated with the core the holoenzyme is formed, which can initiate transcription.

The catalysed reaction is RNA(n) + a ribonucleoside 5'-triphosphate = RNA(n+1) + diphosphate. Its function is as follows. DNA-dependent RNA polymerase catalyzes the transcription of DNA into RNA using the four ribonucleoside triphosphates as substrates. In Syntrophus aciditrophicus (strain SB), this protein is DNA-directed RNA polymerase subunit alpha.